A 225-amino-acid chain; its full sequence is THAP domain-containing protein 1 A (225 aa).

A THAP-type zinc finger spans residues 5-57 (CSAYGCKNRYDKDKPISFHKFPLKRPLLCKKWEAAVRRAEFKPTKYSSICSDH). A coiled-coil region spans residues 139–194 (VEDTVHQRRRIQQLEEQVDKLRKKLKIANQKCRRQERSLEKLEREVSEYREAKGSG).

This sequence belongs to the THAP1 family.

It is found in the nucleus. It localises to the nucleoplasm. DNA-binding transcription regulator that regulates endothelial cell proliferation and G1/S cell-cycle progression. Specifically binds the 5'-[AT]NTNN[GT]GGCA[AGT]-3' core DNA sequence and acts by modulating expression of pRB-E2F cell-cycle target genes. This Xenopus laevis (African clawed frog) protein is THAP domain-containing protein 1 A (thap1-a).